Reading from the N-terminus, the 147-residue chain is Large ribosomal subunit protein uL15 (147 aa).

Residues 1–15 (MTDRVKKTRKLRGHV) show a composition bias toward basic residues. The segment at 1-34 (MTDRVKKTRKLRGHVSHGYGRVGKHRKHSGGRGL) is disordered.

Belongs to the universal ribosomal protein uL15 family.

This Encephalitozoon cuniculi (strain GB-M1) (Microsporidian parasite) protein is Large ribosomal subunit protein uL15 (RPL27A).